A 215-amino-acid polypeptide reads, in one-letter code: Cytidylate kinase (215 aa).

Residue 10–18 participates in ATP binding; it reads GPAASGKGT.

The protein belongs to the cytidylate kinase family. Type 1 subfamily.

It is found in the cytoplasm. It carries out the reaction CMP + ATP = CDP + ADP. It catalyses the reaction dCMP + ATP = dCDP + ADP. This is Cytidylate kinase from Bartonella tribocorum (strain CIP 105476 / IBS 506).